Consider the following 620-residue polypeptide: Probable protein arginine N-methyltransferase 3 (620 aa).

Positions 1–17 (MATREHELRPEQERLGE) are enriched in basic and acidic residues. A disordered region spans residues 1-45 (MATREHELRPEQERLGEDREEYEDGEEEEEEGEEGWDDWESDGDD). Residues 18-45 (DREEYEDGEEEEEEGEEGWDDWESDGDD) show a composition bias toward acidic residues. The segment at 55–78 (LLCLFCSARFDSESSLFSHCASEH) adopts a C2H2-type 1 zinc-finger fold. A C2H2-type 2; degenerate zinc finger spans residues 110 to 137 (NKCWSCGQVFSSNSELCGHLHALEIPQL). Residues 253 to 582 (DESYFGSYSS…DECPAVMIRS (330 aa)) enclose the SAM-dependent MTase PRMT-type domain. Arginine 275, glycine 299, aspartate 321, serine 323, and glutamate 364 together coordinate S-adenosyl-L-homocysteine. Catalysis depends on residues glutamate 383 and glutamate 392.

Belongs to the class I-like SAM-binding methyltransferase superfamily. Protein arginine N-methyltransferase family.

Its subcellular location is the cytoplasm. It is found in the cytosol. The catalysed reaction is L-arginyl-[protein] + S-adenosyl-L-methionine = N(omega)-methyl-L-arginyl-[protein] + S-adenosyl-L-homocysteine + H(+). It carries out the reaction L-arginyl-[protein] + 2 S-adenosyl-L-methionine = N(omega),N(omega)-dimethyl-L-arginyl-[protein] + 2 S-adenosyl-L-homocysteine + 2 H(+). In terms of biological role, protein-arginine N-methyltransferase that catalyzes both the monomethylation and asymmetric dimethylation of the guanidino nitrogens of arginine residues in target proteins, and therefore falls into the group of type I methyltransferases. This chain is Probable protein arginine N-methyltransferase 3 (PRMT3), found in Oryza sativa subsp. japonica (Rice).